The following is a 143-amino-acid chain: Envelope protein A28 homolog (143 aa).

The helical; Signal-anchor for type II membrane protein transmembrane segment at methionine 1 to phenylalanine 21 threads the bilayer. Over glutamine 22–serine 143 the chain is Virion surface.

It belongs to the poxviridae A28 protein family. Contains two intramolecular disulfide bonds. They are created by the viral disulfide bond formation pathway, a poxvirus-specific pathway that operates on the cytoplasmic side of the MV membranes.

It is found in the virion membrane. Functionally, envelope protein required for virus entry into host cell and for cell-cell fusion (syncytium formation). This is Envelope protein A28 homolog from Amsacta (AmEPV).